We begin with the raw amino-acid sequence, 30 residues long: Cyclotide hyen-F (30 aa).

Residues Gly1–Asn30 constitute a cross-link (cyclopeptide (Gly-Asn)). 3 disulfides stabilise this stretch: Cys4–Cys20, Cys8–Cys22, and Cys13–Cys27.

This is a cyclic peptide. Detected in seeds (at protein level).

Its function is as follows. Probably participates in a plant defense mechanism. This Pigea enneasperma (Spade flower) protein is Cyclotide hyen-F.